The following is a 443-amino-acid chain: UDP-N-acetylmuramate--L-alanine ligase (443 aa).

110–116 (GAHGKTS) contributes to the ATP binding site.

Belongs to the MurCDEF family.

The protein localises to the cytoplasm. The enzyme catalyses UDP-N-acetyl-alpha-D-muramate + L-alanine + ATP = UDP-N-acetyl-alpha-D-muramoyl-L-alanine + ADP + phosphate + H(+). The protein operates within cell wall biogenesis; peptidoglycan biosynthesis. Its function is as follows. Cell wall formation. This is UDP-N-acetylmuramate--L-alanine ligase from Streptococcus equi subsp. zooepidemicus (strain MGCS10565).